A 447-amino-acid chain; its full sequence is ATP-dependent protease ATPase subunit HslU (447 aa).

ATP contacts are provided by residues I17, G59–E64, D256, E321, and R393.

The protein belongs to the ClpX chaperone family. HslU subfamily. As to quaternary structure, a double ring-shaped homohexamer of HslV is capped on each side by a ring-shaped HslU homohexamer. The assembly of the HslU/HslV complex is dependent on binding of ATP.

The protein localises to the cytoplasm. Its function is as follows. ATPase subunit of a proteasome-like degradation complex; this subunit has chaperone activity. The binding of ATP and its subsequent hydrolysis by HslU are essential for unfolding of protein substrates subsequently hydrolyzed by HslV. HslU recognizes the N-terminal part of its protein substrates and unfolds these before they are guided to HslV for hydrolysis. The protein is ATP-dependent protease ATPase subunit HslU of Pseudomonas putida (strain GB-1).